The sequence spans 385 residues: Glucans biosynthesis protein C (385 aa).

10 helical membrane-spanning segments follow: residues 17 to 37 (AWLM…SHTW), 60 to 80 (MQVF…RYPL), 91 to 111 (VGIP…IMLQ), 137 to 157 (ISHL…VWIF), 173 to 193 (KFSM…YAVI), 212 to 232 (FIVM…LAFI), 239 to 259 (LFTT…VAYL), 274 to 294 (TESV…FSFG), 311 to 331 (ASLF…AYIT), and 338 to 358 (WLGF…LYEI).

The protein belongs to the acyltransferase 3 family. OpgC subfamily.

It is found in the cell membrane. It participates in glycan metabolism; osmoregulated periplasmic glucan (OPG) biosynthesis. In terms of biological role, necessary for the succinyl substitution of periplasmic glucans. Could catalyze the transfer of succinyl residues from the cytoplasmic side of the membrane to the nascent glucan backbones on the periplasmic side of the membrane. The sequence is that of Glucans biosynthesis protein C from Shigella sonnei (strain Ss046).